A 250-amino-acid polypeptide reads, in one-letter code: 1-(5-phosphoribosyl)-5-[(5-phosphoribosylamino)methylideneamino] imidazole-4-carboxamide isomerase (250 aa).

Asp-10 functions as the Proton acceptor in the catalytic mechanism. The active-site Proton donor is Asp-131.

The protein belongs to the HisA/HisF family.

It is found in the cytoplasm. It carries out the reaction 1-(5-phospho-beta-D-ribosyl)-5-[(5-phospho-beta-D-ribosylamino)methylideneamino]imidazole-4-carboxamide = 5-[(5-phospho-1-deoxy-D-ribulos-1-ylimino)methylamino]-1-(5-phospho-beta-D-ribosyl)imidazole-4-carboxamide. Its pathway is amino-acid biosynthesis; L-histidine biosynthesis; L-histidine from 5-phospho-alpha-D-ribose 1-diphosphate: step 4/9. The sequence is that of 1-(5-phosphoribosyl)-5-[(5-phosphoribosylamino)methylideneamino] imidazole-4-carboxamide isomerase from Desulfitobacterium hafniense (strain DSM 10664 / DCB-2).